The sequence spans 131 residues: Small ribosomal subunit protein uS8 (131 aa).

It belongs to the universal ribosomal protein uS8 family. As to quaternary structure, part of the 30S ribosomal subunit. Contacts proteins S5 and S12.

In terms of biological role, one of the primary rRNA binding proteins, it binds directly to 16S rRNA central domain where it helps coordinate assembly of the platform of the 30S subunit. This chain is Small ribosomal subunit protein uS8, found in Erythrobacter litoralis (strain HTCC2594).